The primary structure comprises 78 residues: Small ribosomal subunit protein bS18 (78 aa).

This sequence belongs to the bacterial ribosomal protein bS18 family. In terms of assembly, part of the 30S ribosomal subunit. Forms a tight heterodimer with protein bS6.

Binds as a heterodimer with protein bS6 to the central domain of the 16S rRNA, where it helps stabilize the platform of the 30S subunit. The chain is Small ribosomal subunit protein bS18 from Lactobacillus johnsonii (strain CNCM I-12250 / La1 / NCC 533).